A 321-amino-acid polypeptide reads, in one-letter code: Replication factor C small subunit (321 aa).

Gly-43 to Thr-50 is an ATP binding site.

Belongs to the activator 1 small subunits family. RfcS subfamily. In terms of assembly, heteromultimer composed of small subunits (RfcS) and large subunits (RfcL).

Functionally, part of the RFC clamp loader complex which loads the PCNA sliding clamp onto DNA. This chain is Replication factor C small subunit, found in Methanosphaera stadtmanae (strain ATCC 43021 / DSM 3091 / JCM 11832 / MCB-3).